The primary structure comprises 873 residues: MQDKYQPAAVETAAQQHWESTAAFRVTEDATRPKYYCLSMFPYPSGKLHMGHVRNYTIGDVLARFHRMRGYNVLQPMGWDAFGMPAENAAIQNNVPPAKWTYANIDYMKGQLKRLGFAIDWSREVATCTPEYYRWEQWLFTRLFEKGLIYKKLGTVNWDPVDETVLANEQVIDGRGWRSGALVEKREIPMYYMKITAYADELLEALDGLPGWPEQVKLMQKNWIGRSEGVEVHFPYDLSTIGSSGVLKVFTTRGDTLMGATYVAVAAEHPLATQAAAGNPELAAFIDECKQGGVAEADLATMEKKGMPTGLRVVHPITGEYLPVWVANYVLMGYGEGAVMAVPAHDERDFAFATKYKLPIKMVVRSTHDAYENVAAPWIDAYAEHGKLVNSGKYDNLHFQDAVDAIAADLAAKGLGNKRVQYRLRDWGISRQRYWGCPIPMVRCDDCGDVPVPDEQLPVVLPENVEITGRGSPLAKMPEFYQCSCPKCGKPARRETDTMDTFVESSWYFLRYASPDSTTAMVDERVNYWAPVDQYIGGIEHAILHLLYSRFFTRAMRDCGLVNVSEPFTNLLTQGMVVAETYYRELDGGKKQWLNPADVQVERDERGRITAAKLASDGLPVVIGGTEKMSKSKNNGVDPQALVDQYGADTARLFIIFAAPPDQQLEWSDSGVEGASRFLRRVWNFGHAFASEFRAALPAARALAAGTLPAALADVRREIHTHLKQANYDFGKHQFNTVVSAAMKILNALEKAPRDDAAAHAEVAEEGFSILVRLLSPITPHIAHALWQDCGFGGDIVQAAWPEPLEAALKQDEIELMLQVNGKLRGSVKVAADAGKSDIEALALASEAAQKFMEGKPPKKVVVVPGRLVNIVV.

The short motif at 42 to 52 (PYPSGKLHMGH) is the 'HIGH' region element. The 'KMSKS' region motif lies at 628–632 (KMSKS). Lys-631 contributes to the ATP binding site.

Belongs to the class-I aminoacyl-tRNA synthetase family.

The protein resides in the cytoplasm. The catalysed reaction is tRNA(Leu) + L-leucine + ATP = L-leucyl-tRNA(Leu) + AMP + diphosphate. In Azoarcus sp. (strain BH72), this protein is Leucine--tRNA ligase.